The following is a 636-amino-acid chain: Cysteine-rich receptor-like protein kinase 24 (636 aa).

Positions 1–20 (MVKFLVIFWFVVISFSHVSA) are cleaved as a signal peptide. 2 consecutive Gnk2-homologous domains span residues 21–124 (QVCL…NRSF) and 130–235 (MEIL…LYPF). Over 21–254 (QVCLERSGFF…RQKDGKSIST (234 aa)) the chain is Extracellular. N-linked (GlcNAc...) asparagine glycosylation is found at Asn33, Asn50, Asn98, Asn101, Asn121, Asn137, Asn145, and Asn197. A helical transmembrane segment spans residues 255–275 (GAIVAIIVVPILLLALGVGLW). Residues 276–636 (KRRKAYKTKT…SVSVTCVSPR (361 aa)) lie on the Cytoplasmic side of the membrane. In terms of domain architecture, Protein kinase spans 312-585 (FHNVNKLGHG…TMSTVFHMLT (274 aa)). ATP is bound by residues 318–326 (LGHGGFGEV) and Lys340. The Proton acceptor role is filled by Asp437.

The protein belongs to the protein kinase superfamily. Ser/Thr protein kinase family. CRK subfamily.

Its subcellular location is the membrane. The catalysed reaction is L-seryl-[protein] + ATP = O-phospho-L-seryl-[protein] + ADP + H(+). It catalyses the reaction L-threonyl-[protein] + ATP = O-phospho-L-threonyl-[protein] + ADP + H(+). This is Cysteine-rich receptor-like protein kinase 24 (CRK24) from Arabidopsis thaliana (Mouse-ear cress).